Reading from the N-terminus, the 279-residue chain is 5'-nucleotidase SurE (279 aa).

4 residues coordinate a divalent metal cation: D28, D29, S59, and N113.

The protein belongs to the SurE nucleotidase family. A divalent metal cation is required as a cofactor.

Its subcellular location is the cytoplasm. It catalyses the reaction a ribonucleoside 5'-phosphate + H2O = a ribonucleoside + phosphate. Its function is as follows. Nucleotidase that shows phosphatase activity on nucleoside 5'-monophosphates. This chain is 5'-nucleotidase SurE, found in Methanospirillum hungatei JF-1 (strain ATCC 27890 / DSM 864 / NBRC 100397 / JF-1).